The sequence spans 232 residues: 2-C-methyl-D-erythritol 4-phosphate cytidylyltransferase (232 aa).

It belongs to the IspD/TarI cytidylyltransferase family. IspD subfamily.

The enzyme catalyses 2-C-methyl-D-erythritol 4-phosphate + CTP + H(+) = 4-CDP-2-C-methyl-D-erythritol + diphosphate. It functions in the pathway isoprenoid biosynthesis; isopentenyl diphosphate biosynthesis via DXP pathway; isopentenyl diphosphate from 1-deoxy-D-xylulose 5-phosphate: step 2/6. Its function is as follows. Catalyzes the formation of 4-diphosphocytidyl-2-C-methyl-D-erythritol from CTP and 2-C-methyl-D-erythritol 4-phosphate (MEP). This Synechococcus sp. (strain ATCC 27144 / PCC 6301 / SAUG 1402/1) (Anacystis nidulans) protein is 2-C-methyl-D-erythritol 4-phosphate cytidylyltransferase.